The primary structure comprises 282 residues: Shikimate dehydrogenase (NADP(+)) (282 aa).

Residues 18 to 20 (SRS) and Thr-65 each bind shikimate. The active-site Proton acceptor is Lys-69. Glu-81 is an NADP(+) binding site. The shikimate site is built by Asn-90 and Asp-105. NADP(+) contacts are provided by residues 130-134 (GAGGA), 154-159 (NRTPAR), and Met-222. Tyr-224 contacts shikimate. Position 245 (Gly-245) interacts with NADP(+).

It belongs to the shikimate dehydrogenase family. Homodimer.

It carries out the reaction shikimate + NADP(+) = 3-dehydroshikimate + NADPH + H(+). It participates in metabolic intermediate biosynthesis; chorismate biosynthesis; chorismate from D-erythrose 4-phosphate and phosphoenolpyruvate: step 4/7. Its function is as follows. Involved in the biosynthesis of the chorismate, which leads to the biosynthesis of aromatic amino acids. Catalyzes the reversible NADPH linked reduction of 3-dehydroshikimate (DHSA) to yield shikimate (SA). The sequence is that of Shikimate dehydrogenase (NADP(+)) from Acidovorax sp. (strain JS42).